Consider the following 286-residue polypeptide: ATP synthase gamma chain (286 aa).

Belongs to the ATPase gamma chain family. As to quaternary structure, F-type ATPases have 2 components, CF(1) - the catalytic core - and CF(0) - the membrane proton channel. CF(1) has five subunits: alpha(3), beta(3), gamma(1), delta(1), epsilon(1). CF(0) has three main subunits: a, b and c.

Its subcellular location is the cell membrane. Its function is as follows. Produces ATP from ADP in the presence of a proton gradient across the membrane. The gamma chain is believed to be important in regulating ATPase activity and the flow of protons through the CF(0) complex. The sequence is that of ATP synthase gamma chain from Mycoplasma mobile (strain ATCC 43663 / 163K / NCTC 11711) (Mesomycoplasma mobile).